The following is a 296-amino-acid chain: Nucleotide-binding protein SSA_0810 (296 aa).

Residue 13 to 20 participates in ATP binding; sequence GMSGAGKT. 63–66 lines the GTP pocket; it reads DMRS. Residues 277 to 296 are disordered; that stretch reads WPVNSSHRDKNRRKETVNRS. The span at 282–296 shows a compositional bias: basic and acidic residues; that stretch reads SHRDKNRRKETVNRS.

This sequence belongs to the RapZ-like family.

In terms of biological role, displays ATPase and GTPase activities. This Streptococcus sanguinis (strain SK36) protein is Nucleotide-binding protein SSA_0810.